Here is a 595-residue protein sequence, read N- to C-terminus: Tumor necrosis factor receptor superfamily member 8 (595 aa).

The first 18 residues, 1-18 (MRVLLAALGLLFLGALRA), serve as a signal peptide directing secretion. Residues 19 to 385 (FPQDRPFEDT…STGKPVLDAG (367 aa)) are Extracellular-facing. TNFR-Cys repeat units lie at residues 28–66 (TCHG…TDCR), 68–106 (QCEP…SRVC), and 107–150 (ECRP…TVCE). Cystine bridges form between C29–C44, C45–C58, C48–C65, C69–C81, C84–C98, C87–C106, C108–C122, and C131–C149. The N-linked (GlcNAc...) asparagine glycan is linked to N32. N-linked (GlcNAc...) asparagine glycosylation is present at N101. A disordered region spans residues 167 to 238 (KEPSSGTIPQ…PTQPCPEGSG (72 aa)). The span at 179–194 (PTPVSPATSSASTMPV) shows a compositional bias: low complexity. TNFR-Cys repeat units lie at residues 205–241 (ASKL…GDCR), 243–281 (QCEP…SRTC), and 282–325 (ECRP…TTFE). 6 disulfides stabilise this stretch: C233/C240, C244/C256, C259/C273, C262/C281, C283/C297, and C289/C300. N-linked (GlcNAc...) asparagine glycosylation occurs at N276. The segment at 323–355 (TFEAPPLGTQPDCNPTPENGEAPASTSPTQSLL) is disordered. N336 is a glycosylation site (N-linked (GlcNAc...) asparagine). The span at 346–355 (ASTSPTQSLL) shows a compositional bias: polar residues. The chain crosses the membrane as a helical span at residues 386 to 406 (PVLFWVILVLVVVVGSSAFLL). Over 407 to 595 (CHRRACRKRI…DPLPTAASGK (189 aa)) the chain is Cytoplasmic. A phosphoserine mark is found at S438 and S452. 3 disordered regions span residues 438–457 (SRPR…TEPV), 485–509 (LQDA…STEH), and 536–595 (EGRG…ASGK). A compositionally biased stretch (polar residues) spans 443–452 (SSTQLRSGAS). The span at 499–509 (DLPEPRVSTEH) shows a compositional bias: basic and acidic residues.

It belongs to the TNFR8 family. Interacts with TRAF1, TRAF2, TRAF3 and TRAF5. Post-translationally, phosphorylated on serine and tyrosine residues. Isoform 2 is constitutively phosphorylated. In terms of tissue distribution, detected in alveolar macrophages (at protein level).

The protein localises to the cell membrane. Its subcellular location is the cytoplasm. Its function is as follows. Receptor for TNFSF8/CD30L. May play a role in the regulation of cellular growth and transformation of activated lymphoblasts. Regulates gene expression through activation of NF-kappa-B. This chain is Tumor necrosis factor receptor superfamily member 8, found in Homo sapiens (Human).